A 362-amino-acid chain; its full sequence is Cytochrome c peroxidase, mitochondrial (362 aa).

A mitochondrion-targeting transit peptide spans 1 to 40 (MASASRQILRAASRASTRTAFAPAASRGLAARTIAGRRFY). Histidine 121 functions as the Proton acceptor in the catalytic mechanism. Residue histidine 244 coordinates heme b. The Tryptophan radical intermediate role is filled by tryptophan 260.

Belongs to the peroxidase family. Cytochrome c peroxidase subfamily. Forms a one-to-one complex with cytochrome c. Requires heme b as cofactor.

It is found in the mitochondrion matrix. The protein resides in the mitochondrion intermembrane space. The catalysed reaction is 2 Fe(II)-[cytochrome c] + H2O2 + 2 H(+) = 2 Fe(III)-[cytochrome c] + 2 H2O. In terms of biological role, destroys radicals which are normally produced within the cells and which are toxic to biological systems. The chain is Cytochrome c peroxidase, mitochondrial (CCP1) from Pyricularia oryzae (strain 70-15 / ATCC MYA-4617 / FGSC 8958) (Rice blast fungus).